A 343-amino-acid chain; its full sequence is General stress protein 30 (343 aa).

It belongs to the polysaccharide pyruvyl transferase family.

This Bacillus subtilis (strain 168) protein is General stress protein 30 (yxaB).